The sequence spans 514 residues: 2,3-bisphosphoglycerate-independent phosphoglycerate mutase (514 aa).

Mn(2+)-binding residues include Asp14 and Ser64. The active-site Phosphoserine intermediate is the Ser64. Substrate contacts are provided by residues His125, Arg155 to Asp156, Arg187, Arg193, Arg263 to Arg266, and Lys336. Asp403, His407, Asp444, His445, and His463 together coordinate Mn(2+).

The protein belongs to the BPG-independent phosphoglycerate mutase family. Monomer. Mn(2+) serves as cofactor.

It carries out the reaction (2R)-2-phosphoglycerate = (2R)-3-phosphoglycerate. Its pathway is carbohydrate degradation; glycolysis; pyruvate from D-glyceraldehyde 3-phosphate: step 3/5. Its function is as follows. Catalyzes the interconversion of 2-phosphoglycerate and 3-phosphoglycerate. The chain is 2,3-bisphosphoglycerate-independent phosphoglycerate mutase from Shigella flexneri.